We begin with the raw amino-acid sequence, 113 residues long: UPF0102 protein Dgeo_1894 (113 aa).

It belongs to the UPF0102 family.

This Deinococcus geothermalis (strain DSM 11300 / CIP 105573 / AG-3a) protein is UPF0102 protein Dgeo_1894.